The sequence spans 153 residues: Large ribosomal subunit protein uL15 (153 aa).

Residues 21 to 40 (RGIGSGKGKTGGRGIKGQKS) form a disordered region. The segment covering 23 to 35 (IGSGKGKTGGRGI) has biased composition (gly residues).

Belongs to the universal ribosomal protein uL15 family. As to quaternary structure, part of the 50S ribosomal subunit.

Its function is as follows. Binds to the 23S rRNA. This is Large ribosomal subunit protein uL15 from Rickettsia canadensis (strain McKiel).